The primary structure comprises 177 residues: MADNTVILDGSGVKRALTRIAHEVLEKNKGVEGLVLVGIRTGGVFLAQELAERLVEIEGVEVPCGAVDITMYRDDIKGHAEHLPVGKTELPFSIEGKKVVLVDDVLFTGRTIRAAMDALMDQGRASCIQLAVLVDRGHRDLPIRADFVGRNVPTSRSENIVVAFDAGNKPTEVILQK.

The PRPP-binding signature appears at 99 to 111 (VVLVDDVLFTGRT).

It belongs to the purine/pyrimidine phosphoribosyltransferase family. PyrR subfamily.

It carries out the reaction UMP + diphosphate = 5-phospho-alpha-D-ribose 1-diphosphate + uracil. In terms of biological role, regulates the transcription of the pyrimidine nucleotide (pyr) operon in response to exogenous pyrimidines. Also displays a weak uracil phosphoribosyltransferase activity which is not physiologically significant. The protein is Bifunctional protein PyrR of Citrifermentans bemidjiense (strain ATCC BAA-1014 / DSM 16622 / JCM 12645 / Bem) (Geobacter bemidjiensis).